The following is a 694-amino-acid chain: Elongation factor G (694 aa).

The tr-type G domain maps to 9-288 (DAIRNIGIMA…VIVKWLPSPL (280 aa)). GTP-binding positions include 18-25 (AHIDAGKT), 82-86 (DTPGH), and 136-139 (NKMD).

This sequence belongs to the TRAFAC class translation factor GTPase superfamily. Classic translation factor GTPase family. EF-G/EF-2 subfamily.

The protein localises to the cytoplasm. Its function is as follows. Catalyzes the GTP-dependent ribosomal translocation step during translation elongation. During this step, the ribosome changes from the pre-translocational (PRE) to the post-translocational (POST) state as the newly formed A-site-bound peptidyl-tRNA and P-site-bound deacylated tRNA move to the P and E sites, respectively. Catalyzes the coordinated movement of the two tRNA molecules, the mRNA and conformational changes in the ribosome. The chain is Elongation factor G (fusA) from Chlamydia muridarum (strain MoPn / Nigg).